We begin with the raw amino-acid sequence, 395 residues long: MWLLLVTSVLSAFGGAHGLFGKLGPKNPEANMNVSQMITYWGYPSEEYEVVTEDGYILGVYRIPYGKKNSENIGKRPVAYLQHGLIASATNWITNLPNNSLAFILADAGYDVWLGNSRGNTWSRKNVYYSPDSVEFWAFSFDEMAKYDLPATIDFIVQKTGQEKIHYVGHSQGTTIGFIAFSTNPALAKKIKRFYALAPVATVKYTESPFKKISLIPKFLLKVIFGNKMFMPHNYLDQFLGTEVCSRELLDLLCSNALFIFCGFDKKNLNVSRFDVYLGHNPAGTSTQDLFHWAQLAKSGKLQAYNWGSPLQNMLHYNQKTPPYYDVSAMTVPIAVWNGGHDILADPQDVAMLLPKLPNLLYHKEILPYNHLDFIWAMDAPQEVYNEIVTMMAED.

Residues 1–18 (MWLLLVTSVLSAFGGAHG) form the signal peptide. The N-linked (GlcNAc...) asparagine glycan is linked to Asn33. The region spanning 81 to 376 (LQHGLIASAT…LPYNHLDFIW (296 aa)) is the AB hydrolase-1 domain. Ser171 functions as the Nucleophile in the catalytic mechanism. Cys245 and Cys254 are disulfide-bonded. Asn270 carries an N-linked (GlcNAc...) asparagine glycan. Catalysis depends on charge relay system residues Asp342 and His371.

Belongs to the AB hydrolase superfamily. Lipase family.

Its subcellular location is the secreted. The enzyme catalyses a triacylglycerol + H2O = a diacylglycerol + a fatty acid + H(+). It carries out the reaction 1,2,3-tri-(9Z-octadecenoyl)-glycerol + H2O = 1,2-di-(9Z-octadecenoyl)-sn-glycerol + (9Z)-octadecenoate + H(+). It catalyses the reaction 1,2,3-trioctanoylglycerol + H2O = 1,2-dioctanoyl-sn-glycerol + octanoate + H(+). In terms of biological role, catalyzes the hydrolysis of triacylglycerols to yield free fatty acids, diacylglycerol, monoacylglycerol, and glycerol. Shows a preferential hydrolysis at the sn-3 position of triacylglycerol. This Mus musculus (Mouse) protein is Gastric triacylglycerol lipase (Lipf).